We begin with the raw amino-acid sequence, 987 residues long: Vacuolar membrane protease (987 aa).

Topologically, residues 1–14 (MATRKARNPLAFMP) are cytoplasmic. A helical transmembrane segment spans residues 15–35 (WPVTILTTAMYLALIIPLLVI). At 36 to 384 (HHNVPPAPRT…AFAVFRLHTL (349 aa)) the chain is on the vacuolar side. 2 N-linked (GlcNAc...) asparagine glycosylation sites follow: N51 and N117. Zn(2+)-binding residues include H167 and D179. E213 functions as the Proton acceptor in the catalytic mechanism. 3 residues coordinate Zn(2+): E214, E239, and H312. The helical transmembrane segment at 385-405 (FALSVTLLIVAPLTLLVTSVI) threads the bilayer. Over 406-435 (LSRADKMYLFRSSVYSEINDDYIPLRGLRG) the chain is Cytoplasmic. The chain crosses the membrane as a helical span at residues 436–456 (FFRFPFLISIPTGVTVGLAYM). The Vacuolar segment spans residues 457 to 466 (VTKVNPFIAH). The chain crosses the membrane as a helical span at residues 467 to 487 (SSSYAVWSMMISAWIFLAWFV). Residues 488–501 (SRVANSARPSAFHR) lie on the Cytoplasmic side of the membrane. A helical transmembrane segment spans residues 502 to 522 (VYTWTWMFVLTWSLMVVCTVY). Over 523-526 (EHEE) the chain is Vacuolar. Residues 527-547 (GLAGGYFIFFYFAGTFLATWI) traverse the membrane as a helical segment. Residues 548 to 649 (SYLELFALPT…WSGVLPRWTW (102 aa)) are Cytoplasmic-facing. Residues 572-600 (STQGSRLAASGDEHQDDAAEEDPTESTSL) form a disordered region. Residues 650 to 670 (LLQLLITAPVILMLIVPLALL) form a helical membrane-spanning segment. The Vacuolar portion of the chain corresponds to 671–686 (TTSALSQTGQDGSPQL). A helical transmembrane segment spans residues 687–707 (LIYLFISCLTALLFAPMLPFI). The Cytoplasmic portion of the chain corresponds to 708–715 (HRYTYHLP). Residues 716 to 736 (IFLLFVFIGTMIYNLVAFPFA) traverse the membrane as a helical segment. The Vacuolar segment spans residues 737-987 (DSNRLKLFFL…KRSSLGALGS (251 aa)). N-linked (GlcNAc...) asparagine glycosylation is found at N781 and N871.

It belongs to the peptidase M28 family. It depends on Zn(2+) as a cofactor.

It localises to the vacuole membrane. Functionally, may be involved in vacuolar sorting and osmoregulation. This Penicillium rubens (strain ATCC 28089 / DSM 1075 / NRRL 1951 / Wisconsin 54-1255) (Penicillium chrysogenum) protein is Vacuolar membrane protease.